We begin with the raw amino-acid sequence, 64 residues long: Frontoxin V (64 aa).

Cystine bridges form between Cys-3–Cys-24, Cys-6–Cys-11, Cys-17–Cys-41, Cys-45–Cys-57, and Cys-58–Cys-63.

Expressed by the venom gland.

The protein localises to the secreted. Its function is as follows. Produces peripheral paralysis by blocking neuromuscular transmission at the postsynaptic site. Binds to the muscular nicotinic acetylcholine receptor (nAChR). This is Frontoxin V from Micrurus frontalis (Coral snake).